We begin with the raw amino-acid sequence, 683 residues long: DNA ligase 2 (683 aa).

Residues 27–31 (DGEFD), 76–77 (SL), and Glu-106 each bind NAD(+). The active-site N6-AMP-lysine intermediate is Lys-108. NAD(+) contacts are provided by Arg-129, Glu-169, Lys-285, and Lys-309. Residues Cys-403, Cys-406, Cys-422, and Cys-428 each coordinate Zn(2+). One can recognise a BRCT domain in the interval 592 to 681 (SIERTLEGLS…PAAVAAEEPE (90 aa)).

Belongs to the NAD-dependent DNA ligase family. LigA subfamily. Mg(2+) serves as cofactor. Mn(2+) is required as a cofactor.

It catalyses the reaction NAD(+) + (deoxyribonucleotide)n-3'-hydroxyl + 5'-phospho-(deoxyribonucleotide)m = (deoxyribonucleotide)n+m + AMP + beta-nicotinamide D-nucleotide.. DNA ligase that catalyzes the formation of phosphodiester linkages between 5'-phosphoryl and 3'-hydroxyl groups in double-stranded DNA using NAD as a coenzyme and as the energy source for the reaction. It is essential for DNA replication and repair of damaged DNA. The polypeptide is DNA ligase 2 (Nocardia farcinica (strain IFM 10152)).